Consider the following 464-residue polypeptide: Glutamate decarboxylase beta (464 aa).

Residue Lys275 is modified to N6-(pyridoxal phosphate)lysine.

The protein belongs to the group II decarboxylase family. Pyridoxal 5'-phosphate is required as a cofactor.

The enzyme catalyses L-glutamate + H(+) = 4-aminobutanoate + CO2. Converts internalized glutamate to GABA and increases the internal pH. Involved in glutamate-dependent acid resistance in gastric fluid. The polypeptide is Glutamate decarboxylase beta (gadB) (Listeria innocua serovar 6a (strain ATCC BAA-680 / CLIP 11262)).